A 397-amino-acid chain; its full sequence is Phosphoglycerate kinase (397 aa).

Substrate-binding positions include 21-23, arginine 37, 60-63, arginine 119, and arginine 152; these read DFN and HLGR. Residues lysine 203, glycine 294, glutamate 325, and 354–357 contribute to the ATP site; that span reads GGDS.

The protein belongs to the phosphoglycerate kinase family. In terms of assembly, monomer.

Its subcellular location is the cytoplasm. The enzyme catalyses (2R)-3-phosphoglycerate + ATP = (2R)-3-phospho-glyceroyl phosphate + ADP. It functions in the pathway carbohydrate degradation; glycolysis; pyruvate from D-glyceraldehyde 3-phosphate: step 2/5. The sequence is that of Phosphoglycerate kinase from Chlorobium phaeovibrioides (strain DSM 265 / 1930) (Prosthecochloris vibrioformis (strain DSM 265)).